Here is a 246-residue protein sequence, read N- to C-terminus: UDP-N-acetyl-D-mannosaminuronic acid transferase (246 aa).

Belongs to the glycosyltransferase 26 family.

The enzyme catalyses UDP-N-acetyl-alpha-D-mannosaminouronate + N-acetyl-alpha-D-glucosaminyl-di-trans,octa-cis-undecaprenyl diphosphate = beta-D-ManNAcA-(1-&gt;4)-alpha-D-GlcNAc-di-trans,octa-cis-undecaprenyl diphosphate + UDP + H(+). Its pathway is bacterial outer membrane biogenesis; enterobacterial common antigen biosynthesis. In terms of biological role, catalyzes the synthesis of Und-PP-GlcNAc-ManNAcA (Lipid II), the second lipid-linked intermediate involved in enterobacterial common antigen (ECA) synthesis. This is UDP-N-acetyl-D-mannosaminuronic acid transferase from Escherichia coli (strain 55989 / EAEC).